The chain runs to 580 residues: Acyl-coenzyme A synthetase ACSM4, mitochondrial (580 aa).

The transit peptide at 1-22 (MKIFFRYQTFRFIWLTKPPGRR) directs the protein to the mitochondrion. ATP is bound by residues 229–237 (TSGTTGFPK), 368–373 (EGYGQT), D455, R470, and K566.

This sequence belongs to the ATP-dependent AMP-binding enzyme family. Mg(2+) is required as a cofactor. The cofactor is Mn(2+).

It localises to the mitochondrion. It catalyses the reaction a medium-chain fatty acid + ATP + CoA = a medium-chain fatty acyl-CoA + AMP + diphosphate. The catalysed reaction is hexanoate + ATP + CoA = hexanoyl-CoA + AMP + diphosphate. It carries out the reaction octanoate + ATP + CoA = octanoyl-CoA + AMP + diphosphate. The enzyme catalyses decanoate + ATP + CoA = decanoyl-CoA + AMP + diphosphate. It catalyses the reaction dodecanoate + ATP + CoA = dodecanoyl-CoA + AMP + diphosphate. Functionally, catalyzes the activation of fatty acids by CoA to produce an acyl-CoA, the first step in fatty acid metabolism. Capable of activating medium-chain fatty acids with a preference for C6-12 fatty acids. This Homo sapiens (Human) protein is Acyl-coenzyme A synthetase ACSM4, mitochondrial (ACSM4).